We begin with the raw amino-acid sequence, 531 residues long: Type 2 DNA topoisomerase 6 subunit B (531 aa).

Residues N42, D76, S97 to K98, G106 to K113, and K427 contribute to the ATP site.

Belongs to the TOP6B family. In terms of assembly, homodimer. Heterotetramer of two Top6A and two Top6B chains.

It catalyses the reaction ATP-dependent breakage, passage and rejoining of double-stranded DNA.. Its function is as follows. Relaxes both positive and negative superturns and exhibits a strong decatenase activity. The polypeptide is Type 2 DNA topoisomerase 6 subunit B (Metallosphaera sedula (strain ATCC 51363 / DSM 5348 / JCM 9185 / NBRC 15509 / TH2)).